Here is a 193-residue protein sequence, read N- to C-terminus: Sorting nexin-22 (193 aa).

A disordered region spans residues 1–21; that stretch reads MLEVHIPSVGPEAEGPRQSPE. The PX domain occupies 1-118; the sequence is MLEVHIPSVG…HFPTDPKASN (118 aa). Arginine 43, serine 45, lysine 66, and arginine 79 together coordinate a 1,2-diacyl-sn-glycero-3-phospho-(1D-myo-inositol-3-phosphate).

This sequence belongs to the sorting nexin family. (Microbial infection) Interacts with P.falciparum (strain 3D7) CK1. In terms of tissue distribution, expressed in erythrocytes (at protein level).

The protein localises to the cytoplasmic vesicle membrane. May be involved in several stages of intracellular trafficking. Interacts with membranes containing phosphatidylinositol 3-phosphate (PtdIns(3P)). In Homo sapiens (Human), this protein is Sorting nexin-22 (SNX22).